The primary structure comprises 512 residues: Cytochrome P450 1A2 (512 aa).

O-linked (GlcNAc) serine glycosylation occurs at S65. Substrate is bound at residue F222. C454 contributes to the heme binding site.

It belongs to the cytochrome P450 family. As to quaternary structure, interacts with PGRMC1; the interaction requires PGRMC1 homodimerization. The cofactor is heme. Constitutively expressed in liver.

It localises to the endoplasmic reticulum membrane. It is found in the microsome membrane. The enzyme catalyses an organic molecule + reduced [NADPH--hemoprotein reductase] + O2 = an alcohol + oxidized [NADPH--hemoprotein reductase] + H2O + H(+). It catalyses the reaction 17beta-estradiol + reduced [NADPH--hemoprotein reductase] + O2 = 2-hydroxy-17beta-estradiol + oxidized [NADPH--hemoprotein reductase] + H2O + H(+). The catalysed reaction is 17beta-estradiol + reduced [NADPH--hemoprotein reductase] + O2 = 4-hydroxy-17beta-estradiol + oxidized [NADPH--hemoprotein reductase] + H2O + H(+). It carries out the reaction estrone + reduced [NADPH--hemoprotein reductase] + O2 = 2-hydroxyestrone + oxidized [NADPH--hemoprotein reductase] + H2O + H(+). The enzyme catalyses estrone + reduced [NADPH--hemoprotein reductase] + O2 = 4-hydroxyestrone + oxidized [NADPH--hemoprotein reductase] + H2O + H(+). It catalyses the reaction cholesterol + reduced [NADPH--hemoprotein reductase] + O2 = 25-hydroxycholesterol + oxidized [NADPH--hemoprotein reductase] + H2O + H(+). The catalysed reaction is all-trans-retinol + reduced [NADPH--hemoprotein reductase] + O2 = all-trans-retinal + oxidized [NADPH--hemoprotein reductase] + 2 H2O + H(+). It carries out the reaction all-trans-retinal + reduced [NADPH--hemoprotein reductase] + O2 = all-trans-retinoate + oxidized [NADPH--hemoprotein reductase] + H2O + 2 H(+). The enzyme catalyses (5Z,8Z,11Z,14Z)-eicosatetraenoate + reduced [NADPH--hemoprotein reductase] + O2 = (14R,15S)-epoxy-(5Z,8Z,11Z)-eicosatrienoate + oxidized [NADPH--hemoprotein reductase] + H2O + H(+). It catalyses the reaction (5Z,8Z,11Z,14Z)-eicosatetraenoate + reduced [NADPH--hemoprotein reductase] + O2 = (14S,15R)-epoxy-(5Z,8Z,11Z)-eicosatrienoate + oxidized [NADPH--hemoprotein reductase] + H2O + H(+). The catalysed reaction is (5Z,8Z,11Z,14Z,17Z)-eicosapentaenoate + reduced [NADPH--hemoprotein reductase] + O2 = (17R,18S)-epoxy-(5Z,8Z,11Z,14Z)-eicosatetraenoate + oxidized [NADPH--hemoprotein reductase] + H2O + H(+). It carries out the reaction (4Z,7Z,10Z,13Z,16Z,19Z)-docosahexaenoate + reduced [NADPH--hemoprotein reductase] + O2 = (19R,20S)-epoxy-(4Z,7Z,10Z,13Z,16Z)-docosapentaenoate + oxidized [NADPH--hemoprotein reductase] + H2O + H(+). The enzyme catalyses (5S)-hydroperoxy-(6E,8Z,11Z,14Z)-eicosatetraenoate = 5-oxo-(6E,8Z,11Z,14Z)-eicosatetraenoate + H2O. It catalyses the reaction (12S)-hydroperoxy-(5Z,8Z,10E,14Z)-eicosatetraenoate = 12-oxo-(5Z,8Z,10E,14Z)-eicosatetraenoate + H2O. The catalysed reaction is (15S)-hydroperoxy-(5Z,8Z,11Z,13E)-eicosatetraenoate = 15-oxo-(5Z,8Z,11Z,13E)-eicosatetraenoate + H2O. It carries out the reaction (13S)-hydroperoxy-(9Z,11E)-octadecadienoate = 13-oxo-(9Z,11E)-octadecadienoate + H2O. The enzyme catalyses (5Z,8Z,11Z,14Z)-eicosatetraenoate + reduced [NADPH--hemoprotein reductase] + O2 = 13-hydroxy-(5Z,8Z,11Z,14Z)-eicosatetraenoate + oxidized [NADPH--hemoprotein reductase] + H2O + H(+). It catalyses the reaction (5Z,8Z,11Z,14Z)-eicosatetraenoate + reduced [NADPH--hemoprotein reductase] + O2 = 19-hydroxy-(5Z,8Z,11Z,14Z)-eicosatetraenoate + oxidized [NADPH--hemoprotein reductase] + H2O + H(+). The catalysed reaction is (9Z,12Z)-octadecadienoate + reduced [NADPH--hemoprotein reductase] + O2 = 11-hydroxy-(9Z,12Z)-octadecadienoate + oxidized [NADPH--hemoprotein reductase] + H2O + H(+). It functions in the pathway cofactor metabolism; retinol metabolism. Its pathway is steroid metabolism; cholesterol metabolism. It participates in lipid metabolism; arachidonate metabolism. A cytochrome P450 monooxygenase involved in the metabolism of various endogenous substrates, including fatty acids, steroid hormones and vitamins. Mechanistically, uses molecular oxygen inserting one oxygen atom into a substrate, and reducing the second into a water molecule, with two electrons provided by NADPH via cytochrome P450 reductase (NADPH--hemoprotein reductase). Catalyzes the hydroxylation of carbon-hydrogen bonds. Exhibits high catalytic activity for the formation of hydroxyestrogens from estrone (E1) and 17beta-estradiol (E2), namely 2-hydroxy E1 and E2. Metabolizes cholesterol toward 25-hydroxycholesterol, a physiological regulator of cellular cholesterol homeostasis. May act as a major enzyme for all-trans retinoic acid biosynthesis in the liver. Catalyzes two successive oxidative transformation of all-trans retinol to all-trans retinal and then to the active form all-trans retinoic acid. Primarily catalyzes stereoselective epoxidation of the last double bond of polyunsaturated fatty acids (PUFA), displaying a strong preference for the (R,S) stereoisomer. Catalyzes bisallylic hydroxylation and omega-1 hydroxylation of PUFA. May also participate in eicosanoids metabolism by converting hydroperoxide species into oxo metabolites (lipoxygenase-like reaction, NADPH-independent). Plays a role in the oxidative metabolism of xenobiotics. Catalyzes the N-hydroxylation of heterocyclic amines and the O-deethylation of phenacetin. Metabolizes caffeine via N3-demethylation. The sequence is that of Cytochrome P450 1A2 (CYP1A2) from Canis lupus familiaris (Dog).